The following is a 198-amino-acid chain: Golgi to ER traffic protein 1 (198 aa).

Topologically, residues 1–6 (MDPFSI) are lumenal. The helical transmembrane segment at 7-26 (LLTLTLIILAQNAVRIVGKS) threads the bilayer. Residues 27–110 (QIHQSIWNLY…AIEKYLGLAI (84 aa)) are Cytoplasmic-facing. Residues 73-106 (KWTKLNRKYDQLQTEIKAVSDQVSQQQQAIEKYL) adopt a coiled-coil conformation. The chain crosses the membrane as a helical span at residues 111–131 (SVTTTLPLWLFRFKYRKQPLF). Topologically, residues 132–155 (YFPKDTFPSYLEWILSFPSVPQGS) are lumenal. A helical transmembrane segment spans residues 156 to 172 (IGIMFWILLLNKFVSNL). At 173-198 (EFIVKTFSTKVEKPVPIVKVEDLSPK) the chain is on the cytoplasmic side.

This sequence belongs to the WRB/GET1 family. As to quaternary structure, component of the Golgi to ER traffic (GET) complex, which is composed of GET1, GET2 and GET3. Within the complex, GET1 and GET2 form a heterotetramer which is stabilized by phosphatidylinositol binding and which binds to the GET3 homodimer.

It is found in the endoplasmic reticulum membrane. The protein resides in the golgi apparatus membrane. In terms of biological role, required for the post-translational delivery of tail-anchored (TA) proteins to the endoplasmic reticulum. Together with GET2, acts as a membrane receptor for soluble GET3, which recognizes and selectively binds the transmembrane domain of TA proteins in the cytosol. The GET complex cooperates with the HDEL receptor ERD2 to mediate the ATP-dependent retrieval of resident ER proteins that contain a C-terminal H-D-E-L retention signal from the Golgi to the ER. In Komagataella phaffii (strain GS115 / ATCC 20864) (Yeast), this protein is Golgi to ER traffic protein 1.